The sequence spans 205 residues: LexA repressor (205 aa).

Residues 28–48 constitute a DNA-binding region (H-T-H motif); that stretch reads RAEIAKRLGFKSANAAEEHLK. Active-site for autocatalytic cleavage activity residues include serine 122 and lysine 159.

This sequence belongs to the peptidase S24 family. Homodimer.

The enzyme catalyses Hydrolysis of Ala-|-Gly bond in repressor LexA.. Its function is as follows. Represses a number of genes involved in the response to DNA damage (SOS response), including recA and lexA. In the presence of single-stranded DNA, RecA interacts with LexA causing an autocatalytic cleavage which disrupts the DNA-binding part of LexA, leading to derepression of the SOS regulon and eventually DNA repair. The polypeptide is LexA repressor (Shewanella woodyi (strain ATCC 51908 / MS32)).